The primary structure comprises 238 residues: tRNA (guanine-N(7)-)-methyltransferase (238 aa).

The S-adenosyl-L-methionine site is built by E70, D95, D122, and D145. Residue D145 is part of the active site. Substrate contacts are provided by residues K149, D181, and 216-219 (TKFE).

The protein belongs to the class I-like SAM-binding methyltransferase superfamily. TrmB family.

The catalysed reaction is guanosine(46) in tRNA + S-adenosyl-L-methionine = N(7)-methylguanosine(46) in tRNA + S-adenosyl-L-homocysteine. The protein operates within tRNA modification; N(7)-methylguanine-tRNA biosynthesis. Catalyzes the formation of N(7)-methylguanine at position 46 (m7G46) in tRNA. The sequence is that of tRNA (guanine-N(7)-)-methyltransferase from Neisseria meningitidis serogroup B (strain ATCC BAA-335 / MC58).